The following is a 245-amino-acid chain: Ubiquinone/menaquinone biosynthesis C-methyltransferase UbiE (245 aa).

S-adenosyl-L-methionine-binding positions include threonine 71, aspartate 92, and 118-119 (DA).

This sequence belongs to the class I-like SAM-binding methyltransferase superfamily. MenG/UbiE family.

The enzyme catalyses a 2-demethylmenaquinol + S-adenosyl-L-methionine = a menaquinol + S-adenosyl-L-homocysteine + H(+). It carries out the reaction a 2-methoxy-6-(all-trans-polyprenyl)benzene-1,4-diol + S-adenosyl-L-methionine = a 5-methoxy-2-methyl-3-(all-trans-polyprenyl)benzene-1,4-diol + S-adenosyl-L-homocysteine + H(+). The protein operates within quinol/quinone metabolism; menaquinone biosynthesis; menaquinol from 1,4-dihydroxy-2-naphthoate: step 2/2. It participates in cofactor biosynthesis; ubiquinone biosynthesis. Methyltransferase required for the conversion of demethylmenaquinol (DMKH2) to menaquinol (MKH2) and the conversion of 2-polyprenyl-6-methoxy-1,4-benzoquinol (DDMQH2) to 2-polyprenyl-3-methyl-6-methoxy-1,4-benzoquinol (DMQH2). The chain is Ubiquinone/menaquinone biosynthesis C-methyltransferase UbiE from Neisseria meningitidis serogroup C / serotype 2a (strain ATCC 700532 / DSM 15464 / FAM18).